The sequence spans 1621 residues: MALQSAPKLLYSSPSPSVFSANERRVAFSDFVGLSKKRSRRRRIAGTFRNFPALSAVSSAIKAVVDVDRAHHSTDSGSPTVSTSSHPLDQQVVNLEDILAERGACGVGFIANLDNKGSFQIVKDALTALGCMEHRGGCGSDNDSGDGSGVMTAIPWDLFNDWGKDQGIGPFDRSHTGVGMVFLPKDDLLAEEAKKVVLDTFAQEGIEVIGWRSVPTNVSVVGRNAKETMPNIQQVFVRIIKEDSTDDIERELYICRKLIERAASSHTWASELYFCSLSNQTIIYKGMLRSEVLGMFYYDLQNERYTSPFAIYHRRYSTNTSPRWPLAQPMRFLGHNGEINTIQGNLNWMRSREPSIQSPVWRGRENEIRPYGNPKASDSANLDSAAELLIRSGRTPEEALMILVPEAYKNHPTLMIKYPEAVDFYDYYKGQMETWDGPALLLFSDGKTVGACLDRNGLRPARYWRTVDNVVYVASEVGVLPMDESKVTMKGRLGPGMMISVDLSSGQVYENTEVKKRVASSNPYGKWVKENLRSLKAVNFLSRALLENDTILRNQQAFGYSSEDVQMVIESMASQGKEPTFCMGDDIPLAVMSQKPHMLYDYFKQRFAQVTNPAIDPLREGLVMSLEVNIGKRGNILEVGPENASQVILPSPVLNEGELEALVNDPLLKAQMLPIFFDIRKGVEGTLEKRLNRLCEAADEAVRNGSQMLVLSDRSEELEPTRPAIPILLAVGAVHQHLIQNGLRMYTSIVVDTAQCFSTHQFACLIGYGASAICPYLALETCRQWRLSNKTVNLMRTGKIPTVTIEQAQKNFCKAVKSGLLKILSKMGISLLSSYCGAQIFEIYGLGKDVVDIAFQGSVSKMGGLTLDELARETLSFWVKAFSEDTAKRLENFGFIQFRPGGEYHVNNPEMSKLLHKAVRNKSESAYAVYQQHLANRPVSVLRDLLEFKSDRAPISVGKVEPATSIVERFCTGGMSLGAISRETHEAIAIAMNRLGGKSNSGEGGEDPIRWRPLTDVVDGYSSTLPHLKGLQNGDTATSAIKQVASGRFGVTPTFLVNADQIEIKIAQGAKPGEGGQLPGKKVSAYIARLRNSKPGVPLISPPPHHDIYSIEDLAQLIYDLHQINPKEKVSVKLVAEAGIGTVASGVAKGNADIIQVSGHDGGTGASPISSIKHAGGPWELGLSETHQTLISNGLRERVILRVDGGLKCGVDVMMAAAMGADEYGFGSLAMIATGCVMARICHTNNCPVGVASQREELRARFPGVPGDLVNFFLYVAEEVRGILAQLGFEKLDDIIGRTDILKPRDISLMKTQHLDLSYILASAGLPTMSSTAIRKQEVHTNGPVLDDQILSDPEIIDAIENEKIVNKTVKIFNVDRAVCGRIAGVIAKKYGDTGFAGQLNLTFEGSAGQSFAVFLTPGMNIRLVGESNDYVGKGMAGGELIVTPAENPGFRPEDATIVGNTCLYGATGGQIFVRGKAGERFAVRNSLAEAVVEGTGDHCCEYMTGGCVVILGKVGRNVAAGMTGGLAYILDEDDTLIPKVNKEIVKIQRVTAPVGQMQLKNLIEAHVEKTGSSKGASILKDWDKYLPLFWQLVPPSEEDTPEASAMFEQMTSEGASLQSA.

Residues 1–57 (MALQSAPKLLYSSPSPSVFSANERRVAFSDFVGLSKKRSRRRRIAGTFRNFPALSAV) constitute a chloroplast transit peptide. The active-site Nucleophile is Cys105. The Glutamine amidotransferase type-2 domain occupies 105–504 (CGVGFIANLD…PGMMISVDLS (400 aa)). 1183-1240 (LSETHQTLISNGLRERVILRVDGGLKCGVDVMMAAAMGADEYGFGSLAMIATGCVMAR) serves as a coordination point for FMN. [3Fe-4S] cluster is bound by residues Cys1236, Cys1242, and Cys1247.

This sequence belongs to the glutamate synthase family. In terms of assembly, interacts with ferredoxin. Interacts (via FMN-binding domain) with SQD1. It depends on [3Fe-4S] cluster as a cofactor. The cofactor is FMN. In terms of tissue distribution, expressed in young leaves. Not detected in mature leaves.

It is found in the plastid. Its subcellular location is the chloroplast stroma. The enzyme catalyses 2 oxidized [2Fe-2S]-[ferredoxin] + 2 L-glutamate = L-glutamine + 2 reduced [2Fe-2S]-[ferredoxin] + 2-oxoglutarate + 2 H(+). It participates in amino-acid biosynthesis; L-glutamate biosynthesis via GLT pathway; L-glutamate from 2-oxoglutarate and L-glutamine (ferredoxin route): step 1/1. Its pathway is energy metabolism; nitrogen metabolism. With respect to regulation, inhibited by N-bromosuccinimide, which is specific for modification of tryptophan residues probably involved in the electron transfer from ferredoxin. Its function is as follows. Catalyzes the reductive conversion of 2-oxoglutarate plus glutamine to two molecules of glutamate, using reduced ferredoxin as the electron donor. Contains one FMN but no FAD. The FMN-binding domain is also involved in the delivery of sulfite to the reaction center of SQD1. The sequence is that of Ferredoxin-dependent glutamate synthase, chloroplastic from Spinacia oleracea (Spinach).